The primary structure comprises 2175 residues: Homeobox protein cut (2175 aa).

2 disordered regions span residues 139 to 170 (NLLA…QQSG) and 249 to 432 (GNVK…GQPA). Composition is skewed to low complexity over residues 153–169 (LLSA…LQQS) and 249–268 (GNVK…SNNS). A coiled-coil region spans residues 265–343 (SNNSHQDEEE…ENKDAGEASL (79 aa)). Acidic residues predominate over residues 271–294 (DEEELDDEEEDEEEDEDEDDEEEN). A compositionally biased stretch (polar residues) spans 309 to 320 (QQETRTEPSATT). Residues 344–359 (NVSNNHNTTDSNNSCS) are compositionally biased toward low complexity. The span at 360–374 (RKNNNGGNESEQHVA) shows a compositional bias: polar residues. A compositionally biased stretch (low complexity) spans 384–415 (NNNTNTSNNNNTSNTATSNTNNNNNNNSSSGN). The stretch at 433–499 (VLLAAKDKEI…NEALAEATAL (67 aa)) forms a coiled coil. The span at 503–515 (ASTNNNNNSQSSD) shows a compositional bias: low complexity. Disordered regions lie at residues 503-600 (ASTN…KIKK) and 656-765 (ASDA…NTNA). Residues 546-568 (AEDDEEDEDQAMLVDSEEAEDKP) show a composition bias toward acidic residues. The segment covering 673–696 (QQQHQHQQQHHQQQHLHQQHHHHL) has biased composition (basic residues). The span at 697-710 (QQQPNSGSNSNPAS) shows a compositional bias: low complexity. Positions 714 to 735 (HHGHHLHGHGLLHPSSAHHLHH) are enriched in basic residues. Residues 738–765 (TESNSNSSTPTAAGNNNGSNNSSSNTNA) are compositionally biased toward low complexity. A DNA-binding region (CUT 1) is located at residues 877–964 (NMDKYANQAL…VMLLKSLIPK (88 aa)). 2 disordered regions span residues 1001 to 1083 (LMKQ…HDDQ) and 1197 to 1289 (QRSS…EFAA). 2 stretches are compositionally biased toward basic and acidic residues: residues 1009 to 1030 (QHRE…EDSK) and 1062 to 1083 (QRER…HDDQ). Residues 1056–1161 (EQAAAQQRER…QQQAAQAQAQ (106 aa)) are a coiled coil. Residues 1249 to 1282 (GAPPTAAPPTGGASSNSAAPSPLSNSILPPALSS) show a composition bias toward low complexity. Positions 1330 to 1417 (QQQFDMFNNL…VHKLVASQYK (88 aa)) form a DNA-binding region, CUT 2. Residues 1463–1522 (AQAQHLMQQMQAAAMSAAMQQQQVAQAQQQAQQAQQAQQHLQQQAQQHLQQQQHLAQQQH) adopt a coiled-coil conformation. Residues 1507-1540 (AQQHLQQQQHLAQQQHPHQQHHQAAAAAAALHHQ) show a composition bias toward low complexity. 6 disordered regions span residues 1507-1588 (AQQH…PMLM), 1695-1747 (ERRE…PSKK), 1803-1826 (QVPH…ATPF), 1922-1955 (RSDD…DKTT), 2069-2097 (KQEE…QKLK), and 2113-2175 (SSTG…GWNY). Gly residues predominate over residues 1564–1573 (AQPGGPGGNQ). Positions 1608 to 1695 (YEMAALTQDL…VERLQLLKNE (88 aa)) form a DNA-binding region, CUT 3. Positions 1709–1732 (NQQDNSSDTSSNDTNDFYTSSPGP) are enriched in low complexity. The homeobox DNA-binding region spans 1745 to 1804 (SKKQRVLFSEEQKEALRLAFALDPYPNVGTIEFLANELGLATRTITNWFHNHRMRLKQQV). Ser1940 and Ser1944 each carry phosphoserine. Over residues 2126-2135 (PLAPPPPPPA) the composition is skewed to pro residues. Positions 2136–2175 (ASSSIVSGESTTSSSSSSNTSSSTPAVTTAAATAAAGWNY) are enriched in low complexity.

The protein belongs to the CUT homeobox family. In terms of tissue distribution, detected in many cells in the central nervous system, all external sensory organs, some peripheral neurons, and in the non-neural cells of the spiracles and the Malpighian tubules.

The protein resides in the nucleus. In terms of biological role, regulator of cell fate decisions in multiple lineages. Specifically, functions as a determination factor that specifies sensory organ identity in precursor cells. Probably also involved in cell type specification of Malpighian tubules. In absence of cut gene external sensory organs are transformed into chordotonal organs. This Drosophila melanogaster (Fruit fly) protein is Homeobox protein cut (ct).